The following is a 29-amino-acid chain: NADP phosphatase 1 (29 aa).

In terms of assembly, homodimer.

The protein resides in the cytoplasm. The chain is NADP phosphatase 1 from Arthrobacter sp. (strain KM).